An 85-amino-acid chain; its full sequence is Small ribosomal subunit protein bS20 (85 aa).

It belongs to the bacterial ribosomal protein bS20 family.

Its function is as follows. Binds directly to 16S ribosomal RNA. The chain is Small ribosomal subunit protein bS20 from Borrelia hermsii (strain HS1 / DAH).